A 65-amino-acid chain; its full sequence is Large ribosomal subunit protein bL35 (65 aa).

This sequence belongs to the bacterial ribosomal protein bL35 family.

This chain is Large ribosomal subunit protein bL35, found in Rhodospirillum rubrum (strain ATCC 11170 / ATH 1.1.1 / DSM 467 / LMG 4362 / NCIMB 8255 / S1).